Consider the following 409-residue polypeptide: Epoxyqueuosine reductase (409 aa).

Residues Met-1 to Ser-23 are disordered. Asp-178 acts as the Proton donor in catalysis. Residues Ala-232 to Arg-261 enclose the 4Fe-4S ferredoxin-type domain. [4Fe-4S] cluster is bound by residues Cys-241, Cys-244, Cys-247, Cys-251, Cys-267, Cys-294, Cys-297, and Cys-301.

It belongs to the QueG family. In terms of assembly, monomer. The cofactor is cob(II)alamin. It depends on [4Fe-4S] cluster as a cofactor.

It localises to the cytoplasm. It catalyses the reaction epoxyqueuosine(34) in tRNA + AH2 = queuosine(34) in tRNA + A + H2O. Its pathway is tRNA modification; tRNA-queuosine biosynthesis. Its function is as follows. Catalyzes the conversion of epoxyqueuosine (oQ) to queuosine (Q), which is a hypermodified base found in the wobble positions of tRNA(Asp), tRNA(Asn), tRNA(His) and tRNA(Tyr). This is Epoxyqueuosine reductase from Burkholderia pseudomallei (strain K96243).